The chain runs to 97 residues: Aspartyl/glutamyl-tRNA(Asn/Gln) amidotransferase subunit C (97 aa).

Belongs to the GatC family. As to quaternary structure, heterotrimer of A, B and C subunits.

It catalyses the reaction L-glutamyl-tRNA(Gln) + L-glutamine + ATP + H2O = L-glutaminyl-tRNA(Gln) + L-glutamate + ADP + phosphate + H(+). The enzyme catalyses L-aspartyl-tRNA(Asn) + L-glutamine + ATP + H2O = L-asparaginyl-tRNA(Asn) + L-glutamate + ADP + phosphate + 2 H(+). In terms of biological role, allows the formation of correctly charged Asn-tRNA(Asn) or Gln-tRNA(Gln) through the transamidation of misacylated Asp-tRNA(Asn) or Glu-tRNA(Gln) in organisms which lack either or both of asparaginyl-tRNA or glutaminyl-tRNA synthetases. The reaction takes place in the presence of glutamine and ATP through an activated phospho-Asp-tRNA(Asn) or phospho-Glu-tRNA(Gln). The protein is Aspartyl/glutamyl-tRNA(Asn/Gln) amidotransferase subunit C of Parasynechococcus marenigrum (strain WH8102).